A 200-amino-acid chain; its full sequence is MQKFIIHKGIACPLEYANIDTDQIIPKQFLLAVSKQGFGRHLFHDLRYLDDKESVLNMDFNLNKKEYQNSSILVSFENFGSGSSREHAPWALVDYGIRAIIAPSFADIFKNNALGNGLLTIELAKDEVLEIVDELKKSQDKNIEISLLEKRVFFKDKIFSFDLDNFHRICLLEGLDNIALTLKHEAQIKAYEKNSKSFLV.

Belongs to the LeuD family. LeuD type 1 subfamily. In terms of assembly, heterodimer of LeuC and LeuD.

It catalyses the reaction (2R,3S)-3-isopropylmalate = (2S)-2-isopropylmalate. It functions in the pathway amino-acid biosynthesis; L-leucine biosynthesis; L-leucine from 3-methyl-2-oxobutanoate: step 2/4. In terms of biological role, catalyzes the isomerization between 2-isopropylmalate and 3-isopropylmalate, via the formation of 2-isopropylmaleate. This is 3-isopropylmalate dehydratase small subunit from Campylobacter jejuni (strain RM1221).